The sequence spans 768 residues: Vitamin B12-dependent ribonucleoside-diphosphate reductase (768 aa).

Positions 3 to 97 (KEVVKRDGTV…LYREKRRAIR (95 aa)) constitute an ATP-cone domain. Substrate-binding positions include serine 234, 249 to 250 (AC), glycine 278, 432 to 436 (NPCGE), and 579 to 583 (PTGTI). Cysteines 250 and 445 form a disulfide. Residue asparagine 432 is the Proton acceptor of the active site. Catalysis depends on cysteine 434, which acts as the Cysteine radical intermediate. The Proton acceptor role is filled by glutamate 436.

This sequence belongs to the ribonucleoside diphosphate reductase class-2 family. Monomer. Adenosylcob(III)alamin is required as a cofactor.

It carries out the reaction a 2'-deoxyribonucleoside 5'-diphosphate + [thioredoxin]-disulfide + H2O = a ribonucleoside 5'-diphosphate + [thioredoxin]-dithiol. In terms of biological role, provides the precursors necessary for DNA synthesis. Catalyzes the biosynthesis of deoxyribonucleotides from the corresponding ribonucleotides. This is Vitamin B12-dependent ribonucleoside-diphosphate reductase from Thermoplasma acidophilum (strain ATCC 25905 / DSM 1728 / JCM 9062 / NBRC 15155 / AMRC-C165).